Consider the following 444-residue polypeptide: ATP-dependent protease ATPase subunit HslU (444 aa).

Residues Ile18, 60-65, Asp256, Glu322, and Arg394 each bind ATP; that span reads GVGKTE.

This sequence belongs to the ClpX chaperone family. HslU subfamily. A double ring-shaped homohexamer of HslV is capped on each side by a ring-shaped HslU homohexamer. The assembly of the HslU/HslV complex is dependent on binding of ATP.

Its subcellular location is the cytoplasm. Its function is as follows. ATPase subunit of a proteasome-like degradation complex; this subunit has chaperone activity. The binding of ATP and its subsequent hydrolysis by HslU are essential for unfolding of protein substrates subsequently hydrolyzed by HslV. HslU recognizes the N-terminal part of its protein substrates and unfolds these before they are guided to HslV for hydrolysis. In Klebsiella pneumoniae (strain 342), this protein is ATP-dependent protease ATPase subunit HslU.